A 209-amino-acid chain; its full sequence is Outer-membrane lipoprotein LolB (209 aa).

Positions 1-17 (MKKSTLLFSLMAMALSG) are cleaved as a signal peptide. The N-palmitoyl cysteine moiety is linked to residue C18. C18 carries the S-diacylglycerol cysteine lipid modification.

The protein belongs to the LolB family. As to quaternary structure, monomer.

The protein localises to the cell outer membrane. Functionally, plays a critical role in the incorporation of lipoproteins in the outer membrane after they are released by the LolA protein. The polypeptide is Outer-membrane lipoprotein LolB (Haemophilus ducreyi (strain 35000HP / ATCC 700724)).